The sequence spans 323 residues: tRNA(Ile)-lysidine synthase (323 aa).

Residue 33 to 38 (SGGPDS) participates in ATP binding.

It belongs to the tRNA(Ile)-lysidine synthase family.

It is found in the cytoplasm. The enzyme catalyses cytidine(34) in tRNA(Ile2) + L-lysine + ATP = lysidine(34) in tRNA(Ile2) + AMP + diphosphate + H(+). Its function is as follows. Ligates lysine onto the cytidine present at position 34 of the AUA codon-specific tRNA(Ile) that contains the anticodon CAU, in an ATP-dependent manner. Cytidine is converted to lysidine, thus changing the amino acid specificity of the tRNA from methionine to isoleucine. The protein is tRNA(Ile)-lysidine synthase of Mycobacterium bovis (strain ATCC BAA-935 / AF2122/97).